The chain runs to 105 residues: MKICKACSSCMVRTYVDGNIIFRCSCGESVQGDSQNLLVSSKVYHTGEMEDKYKIFIKNAPFDPTNCQIKKDCPNCHLDYLTQICIGSQKIIILVCRCGYMSNRG.

The protein belongs to the asfivirus C122R family.

It is found in the virion. This is an uncharacterized protein from African swine fever virus (strain Badajoz 1971 Vero-adapted) (Ba71V).